The chain runs to 565 residues: Granule-bound starch synthase 1b, chloroplastic/amyloplastic (565 aa).

A chloroplast-targeting transit peptide spans 1-34 (VFLSMRNKTQLAKRRATNYETHRNSSRTSSPIVC). Residue Lys52 participates in ADP-alpha-D-glucose binding.

Belongs to the glycosyltransferase 1 family. Bacterial/plant glycogen synthase subfamily.

It is found in the plastid. The protein resides in the chloroplast. Its subcellular location is the amyloplast. It catalyses the reaction an NDP-alpha-D-glucose + [(1-&gt;4)-alpha-D-glucosyl](n) = [(1-&gt;4)-alpha-D-glucosyl](n+1) + a ribonucleoside 5'-diphosphate + H(+). It functions in the pathway glycan biosynthesis; starch biosynthesis. Its function is as follows. Involved in the synthesis of amylose in endosperm. The chain is Granule-bound starch synthase 1b, chloroplastic/amyloplastic from Hordeum vulgare (Barley).